Consider the following 225-residue polypeptide: Ribosomal RNA large subunit methyltransferase E (225 aa).

S-adenosyl-L-methionine is bound by residues G76, W78, D99, D115, and D139. The active-site Proton acceptor is the K179.

This sequence belongs to the class I-like SAM-binding methyltransferase superfamily. RNA methyltransferase RlmE family.

It localises to the cytoplasm. It carries out the reaction uridine(2552) in 23S rRNA + S-adenosyl-L-methionine = 2'-O-methyluridine(2552) in 23S rRNA + S-adenosyl-L-homocysteine + H(+). Specifically methylates the uridine in position 2552 of 23S rRNA at the 2'-O position of the ribose in the fully assembled 50S ribosomal subunit. In Afipia carboxidovorans (strain ATCC 49405 / DSM 1227 / KCTC 32145 / OM5) (Oligotropha carboxidovorans), this protein is Ribosomal RNA large subunit methyltransferase E.